A 360-amino-acid chain; its full sequence is NAD(P)H-quinone oxidoreductase subunit 1, chloroplastic (360 aa).

Helical transmembrane passes span Ile-27–Ile-47, Phe-98–Phe-118, Ile-129–Gly-149, Ala-165–Leu-185, Phe-203–Leu-223, Tyr-248–Ser-268, Leu-269–Leu-289, Ile-297–Ile-317, and Phe-340–Leu-360.

The protein belongs to the complex I subunit 1 family. NDH is composed of at least 16 different subunits, 5 of which are encoded in the nucleus.

The protein resides in the plastid. Its subcellular location is the chloroplast thylakoid membrane. The catalysed reaction is a plastoquinone + NADH + (n+1) H(+)(in) = a plastoquinol + NAD(+) + n H(+)(out). The enzyme catalyses a plastoquinone + NADPH + (n+1) H(+)(in) = a plastoquinol + NADP(+) + n H(+)(out). NDH shuttles electrons from NAD(P)H:plastoquinone, via FMN and iron-sulfur (Fe-S) centers, to quinones in the photosynthetic chain and possibly in a chloroplast respiratory chain. The immediate electron acceptor for the enzyme in this species is believed to be plastoquinone. Couples the redox reaction to proton translocation, and thus conserves the redox energy in a proton gradient. In Olimarabidopsis pumila (Dwarf rocket), this protein is NAD(P)H-quinone oxidoreductase subunit 1, chloroplastic.